The following is a 349-amino-acid chain: sn-glycerol-3-phosphate import ATP-binding protein UgpC (349 aa).

The region spanning 4-234 is the ABC transporter domain; sequence ISLRDVRKSY…PATTFVAGFI (231 aa). 36-43 contributes to the ATP binding site; that stretch reads GPSGCGKS.

Belongs to the ABC transporter superfamily. sn-glycerol-3-phosphate importer (TC 3.A.1.1.3) family. In terms of assembly, the complex is composed of two ATP-binding proteins (UgpC), two transmembrane proteins (UgpA and UgpE) and a solute-binding protein (UgpB).

It localises to the cell inner membrane. It catalyses the reaction sn-glycerol 3-phosphate(out) + ATP + H2O = sn-glycerol 3-phosphate(in) + ADP + phosphate + H(+). Its function is as follows. Part of the ABC transporter complex UgpBAEC involved in sn-glycerol-3-phosphate (G3P) import. Responsible for energy coupling to the transport system. The polypeptide is sn-glycerol-3-phosphate import ATP-binding protein UgpC (Cereibacter sphaeroides (strain ATCC 17023 / DSM 158 / JCM 6121 / CCUG 31486 / LMG 2827 / NBRC 12203 / NCIMB 8253 / ATH 2.4.1.) (Rhodobacter sphaeroides)).